Here is a 29-residue protein sequence, read N- to C-terminus: Orphan peptide CllNtx (29 aa).

In terms of processing, contains 3 disulfide bonds. Expressed by the venom gland.

It localises to the secreted. Its function is as follows. May act as a toxin. This chain is Orphan peptide CllNtx, found in Centruroides limpidus (Mexican scorpion).